The chain runs to 344 residues: Proline-rich transmembrane protein 2 (344 aa).

Disordered regions lie at residues 1–220 (MAAS…GAPP) and 233–265 (GRAH…GGEG). Residues 1 to 272 (MAASSSEVSE…GEGTQKPRDY (272 aa)) lie on the Cytoplasmic side of the membrane. Ser-28 carries the post-translational modification Phosphoserine. The segment covering 69–82 (PETTETPVETPETV) has biased composition (low complexity). Thr-74 and Thr-78 each carry phosphothreonine. Residues 124-143 (AEQQSAAPPEPTSEQALQLN) are compositionally biased toward polar residues. Residues 151-162 (TSQPPPKPPLQA) show a composition bias toward pro residues. Residues 168-178 (ENPTTEVLTES) are compositionally biased toward polar residues. The span at 201-211 (APQPHSPPSTK) shows a compositional bias: pro residues. The residue at position 242 (Ser-242) is a Phosphoserine. Position 244 is an omega-N-methylarginine (Arg-244). A phosphoserine mark is found at Ser-252 and Ser-253. The helical intramembrane region spans 273-293 (IILAILSCFCPMWPVNIVAFA). The Cytoplasmic segment spans residues 294 to 321 (YAVMSRNSLQQGDVDGAQRLGRVAKLLS). A helical membrane pass occupies residues 322 to 342 (IVALVGGVLIIIASCVINLGV). At 343–344 (YK) the chain is on the extracellular side.

Belongs to the CD225/Dispanin family. In terms of assembly, component of the outer core of AMPAR complex. AMPAR complex consists of an inner core made of 4 pore-forming GluA/GRIA proteins (GRIA1, GRIA2, GRIA3 and GRIA4) and 4 major auxiliary subunits arranged in a twofold symmetry. One of the two pairs of distinct binding sites is occupied either by CNIH2, CNIH3 or CACNG2, CACNG3. The other harbors CACNG2, CACNG3, CACNG4, CACNG8 or GSG1L. This inner core of AMPAR complex is complemented by outer core constituents binding directly to the GluA/GRIA proteins at sites distinct from the interaction sites of the inner core constituents. Outer core constituents include at least PRRT1, PRRT2, CKAMP44/SHISA9, FRRS1L and NRN1. The proteins of the inner and outer core serve as a platform for other, more peripherally associated AMPAR constituents. Alone or in combination, these auxiliary subunits control the gating and pharmacology of the AMPAR complex and profoundly impact their biogenesis and protein processing. Interacts with intersectin 1/ITSN1. Interacts with SNARE complex components, including SNAP25, STX1A, SYT1 and SYT2; this interaction may inhibit SNARE complex formation. Neuron-specific expression throughout the brain, including hippocampus (at protein level).

The protein resides in the cell membrane. It is found in the presynaptic cell membrane. The protein localises to the synapse. It localises to the cell projection. Its subcellular location is the axon. The protein resides in the cytoplasmic vesicle. It is found in the secretory vesicle. The protein localises to the synaptic vesicle membrane. It localises to the postsynaptic density membrane. Its subcellular location is the dendritic spine. Functionally, as a component of the outer core of AMPAR complex, may be involved in synaptic transmission in the central nervous system. In hippocampal neurons, in presynaptic terminals, plays an important role in the final steps of neurotransmitter release, possibly by regulating Ca(2+)-sensing. In the cerebellum, may inhibit SNARE complex formation and down-regulate short-term facilitation. This is Proline-rich transmembrane protein 2 (Prrt2) from Rattus norvegicus (Rat).